The sequence spans 520 residues: 5'-nucleotidase domain-containing protein 2 (520 aa).

The active-site Nucleophile is the Asp73. Mg(2+) is bound by residues Asp73, Asp75, and Asp358. Asp75 serves as the catalytic Proton donor.

It belongs to the 5'(3')-deoxyribonucleotidase family. Interacts with tyrosine 3-monooxygenase TH; the interaction results in reduced phosphorylation and decreased catalytic activity of TH.

It is found in the cytoplasm. Functionally, promotes dephosphorylation of tyrosine 3-monooxygenase TH which decreases TH catalytic activity and leads to reduced synthesis of catecholamines including dopamine, noradrenaline and adrenaline. The exact mechanism of activity is unknown but may act as a phosphatase or promote the activity of phosphatases or may inhibit phosphorylation by acting as a barrier to interfere with protein kinase access. This chain is 5'-nucleotidase domain-containing protein 2 (NT5DC2), found in Homo sapiens (Human).